A 392-amino-acid chain; its full sequence is uncharacterized protein (392 aa).

Residues 7–76 (TEYYDLLGIS…RSQYDQFGKE (70 aa)) form the J domain. Position 108 is a phosphoserine (S108).

This is an uncharacterized protein from Schizosaccharomyces pombe (strain 972 / ATCC 24843) (Fission yeast).